The primary structure comprises 327 residues: DNA primase large subunit PriL (327 aa).

The [4Fe-4S] cluster site is built by cysteine 218, cysteine 290, cysteine 299, and cysteine 307.

The protein belongs to the eukaryotic-type primase large subunit family. In terms of assembly, heterodimer of a small subunit (PriS) and a large subunit (PriL). The cofactor is [4Fe-4S] cluster.

Regulatory subunit of DNA primase, an RNA polymerase that catalyzes the synthesis of short RNA molecules used as primers for DNA polymerase during DNA replication. Stabilizes and modulates the activity of the small subunit, increasing the rate of DNA synthesis, and conferring RNA synthesis capability. The DNA polymerase activity may enable DNA primase to also catalyze primer extension after primer synthesis. May also play a role in DNA repair. The polypeptide is DNA primase large subunit PriL (Thermoplasma volcanium (strain ATCC 51530 / DSM 4299 / JCM 9571 / NBRC 15438 / GSS1)).